The sequence spans 521 residues: Ribonuclease Y (521 aa).

A helical membrane pass occupies residues 5 to 25 (TVWILISILLATVGAVVGFFV). A disordered region spans residues 87 to 117 (KQENRLMQKEENLDRKDETLDNRERQLEKKE). A KH domain is found at 211–274 (TVSVVNLPND…ETARIALDKL (64 aa)). In terms of domain architecture, HD spans 337–430 (VLKHSMEVAY…VAAADALSAA (94 aa)).

The protein belongs to the RNase Y family.

Its subcellular location is the cell membrane. In terms of biological role, endoribonuclease that initiates mRNA decay. The sequence is that of Ribonuclease Y from Bacillus mycoides (strain KBAB4) (Bacillus weihenstephanensis).